The chain runs to 136 residues: UPF0225 protein Mpe_A2093 (136 aa).

The protein belongs to the UPF0225 family.

The chain is UPF0225 protein Mpe_A2093 from Methylibium petroleiphilum (strain ATCC BAA-1232 / LMG 22953 / PM1).